The chain runs to 903 residues: Translation initiation factor IF-2 (903 aa).

The disordered stretch occupies residues 66–296; the sequence is QATLKGEGPV…GRSRKREMEN (231 aa). Basic and acidic residues predominate over residues 121 to 132; the sequence is NTDETRVQEHKP. 2 stretches are compositionally biased toward low complexity: residues 139–152 and 178–195; these read AGDAPAAEGTAAAG and AATGQRAQGGEAGRGQQS. The span at 204-231 shows a compositional bias: basic and acidic residues; sequence EGRSRQDENKGSAREDQANRFATRDKEA. The span at 246 to 255 shows a compositional bias: basic residues; sequence RRPAHSKPLR. 2 stretches are compositionally biased toward basic and acidic residues: residues 263-276 and 285-296; these read VTKDLPEKRRDRSN and ESGRSRKREMEN. Positions 403–572 constitute a tr-type G domain; the sequence is ERPPVVTVMG…LLTADVAELK (170 aa). The segment at 412–419 is G1; that stretch reads GHVDHGKT. 412–419 contacts GTP; sequence GHVDHGKT. Residues 437–441 form a G2 region; sequence GITQH. The segment at 458–461 is G3; it reads DTPG. Residues 458–462 and 512–515 each bind GTP; these read DTPGH and NKID. Residues 512-515 are G4; it reads NKID. Residues 548-550 are G5; it reads SAV.

The protein belongs to the TRAFAC class translation factor GTPase superfamily. Classic translation factor GTPase family. IF-2 subfamily.

The protein localises to the cytoplasm. One of the essential components for the initiation of protein synthesis. Protects formylmethionyl-tRNA from spontaneous hydrolysis and promotes its binding to the 30S ribosomal subunits. Also involved in the hydrolysis of GTP during the formation of the 70S ribosomal complex. In Moorella thermoacetica (strain ATCC 39073 / JCM 9320), this protein is Translation initiation factor IF-2.